Reading from the N-terminus, the 307-residue chain is tRNA dimethylallyltransferase (307 aa).

An ATP-binding site is contributed by Gly9–Thr16. Substrate is bound at residue Thr11–Thr16. An interaction with substrate tRNA region spans residues Asp34–Gln37.

Belongs to the IPP transferase family. Monomer. It depends on Mg(2+) as a cofactor.

The catalysed reaction is adenosine(37) in tRNA + dimethylallyl diphosphate = N(6)-dimethylallyladenosine(37) in tRNA + diphosphate. Catalyzes the transfer of a dimethylallyl group onto the adenine at position 37 in tRNAs that read codons beginning with uridine, leading to the formation of N6-(dimethylallyl)adenosine (i(6)A). This chain is tRNA dimethylallyltransferase, found in Levilactobacillus brevis (strain ATCC 367 / BCRC 12310 / CIP 105137 / JCM 1170 / LMG 11437 / NCIMB 947 / NCTC 947) (Lactobacillus brevis).